Reading from the N-terminus, the 496-residue chain is NADH-ubiquinone oxidoreductase 51 kDa subunit, mitochondrial (496 aa).

The N-terminal 30 residues, 1–30 (MISRAAAPSSSIASLSSRSLRAQAPAARSF), are a transit peptide targeting the mitochondrion. Residue 98-107 (GRGGAGFPSG) coordinates NAD(+). 214–261 (GMGAYVCGEETSLIESIEGKAGKPRLKPPFPAAVGLFGCPSTVTNVET) lines the FMN pocket. The [4Fe-4S] cluster site is built by Cys-393, Cys-396, Cys-399, and Cys-439.

Belongs to the complex I 51 kDa subunit family. In terms of assembly, complex I is composed of about 40 different subunits. This is a component of the flavoprotein-sulfur (FP) fragment of the enzyme. The cofactor is FMN. [4Fe-4S] cluster is required as a cofactor.

It is found in the mitochondrion inner membrane. The catalysed reaction is a ubiquinone + NADH + 5 H(+)(in) = a ubiquinol + NAD(+) + 4 H(+)(out). Core subunit of the mitochondrial membrane respiratory chain NADH dehydrogenase (Complex I) that is believed to belong to the minimal assembly required for catalysis. Complex I functions in the transfer of electrons from NADH to the respiratory chain. The immediate electron acceptor for the enzyme is believed to be ubiquinone. This is NADH-ubiquinone oxidoreductase 51 kDa subunit, mitochondrial (NUO51) from Aspergillus niger.